The primary structure comprises 555 residues: uncharacterized protein (555 aa).

The Extracellular portion of the chain corresponds to 1-83 (MSNEDETTRL…GRRKLLCLYG (83 aa)). A helical membrane pass occupies residues 84 to 104 (LVMIICIAESISMTATIPLVM). The Cytoplasmic segment spans residues 105–125 (DKVAEGISDENGHYDSVAVQT). Residues 126-146 (IVSSISSSTMMIAGAISIFMA) form a helical membrane-spanning segment. Residues 147–188 (GKWGELSDRIGRVRVFKYMSGIRVIGLLTHVFTLSSKMKYHK) lie on the Extracellular side of the membrane. A helical transmembrane segment spans residues 189–209 (WAIVLTACIVPSFGGLFALVA). The Cytoplasmic portion of the chain corresponds to 210–229 (NGNSYVSDIVKTEHRMVTIG). A helical transmembrane segment spans residues 230 to 250 (IMMSCIYATMGVGPMFGSFLV). Over 251–257 (KWTHGNG) the chain is Extracellular. Residues 258 to 278 (FIPIYTSIAFVILALIICETI) traverse the membrane as a helical segment. Over 279 to 356 (MVEPRHETQM…LVPRHTVILL (78 aa)) the chain is Cytoplasmic. Positions 289–311 (AHSQSTYTKRREKLRSQSGSDDA) are disordered. The helical transmembrane segment at 357–377 (IVLDILFVCGTTSCMPALILF) threads the bilayer. Topologically, residues 378–386 (STYEYKWHA) are extracellular. A helical membrane pass occupies residues 387 to 407 (VELGYFISILGIGRGVVLLVV). The Cytoplasmic segment spans residues 408-428 (SPTLLYTLKRIYQHLNHSIDK). A helical membrane pass occupies residues 429–449 (IDIFCIQFSMIVITLSLFVMI). The Extracellular segment spans residues 450-459 (RFGEKTPTSM). The chain crosses the membrane as a helical span at residues 460 to 480 (IIFALLQALSAFCSPTLQSGI). The Cytoplasmic portion of the chain corresponds to 481–491 (IKYTSKKHTGE). Residues 492–512 (MFGAMALVRSCVMLVIPPILL) form a helical membrane-spanning segment. Residues 513–523 (KLYGSTVSVNP) lie on the Extracellular side of the membrane. A helical membrane pass occupies residues 524 to 544 (SLFMYIPFSTSIVAILLTFFL). Topologically, residues 545–555 (RIYKNPPLDGP) are cytoplasmic.

It is found in the membrane. This is an uncharacterized protein from Saccharomyces cerevisiae (strain ATCC 204508 / S288c) (Baker's yeast).